A 142-amino-acid polypeptide reads, in one-letter code: Nucleoside diphosphate kinase (142 aa).

Lysine 11, phenylalanine 59, arginine 87, threonine 93, arginine 104, and asparagine 114 together coordinate ATP. Histidine 117 acts as the Pros-phosphohistidine intermediate in catalysis.

The protein belongs to the NDK family. Mg(2+) serves as cofactor.

The protein localises to the cytoplasm. It carries out the reaction a 2'-deoxyribonucleoside 5'-diphosphate + ATP = a 2'-deoxyribonucleoside 5'-triphosphate + ADP. The catalysed reaction is a ribonucleoside 5'-diphosphate + ATP = a ribonucleoside 5'-triphosphate + ADP. Its function is as follows. Major role in the synthesis of nucleoside triphosphates other than ATP. The ATP gamma phosphate is transferred to the NDP beta phosphate via a ping-pong mechanism, using a phosphorylated active-site intermediate. This chain is Nucleoside diphosphate kinase, found in Hyperthermus butylicus (strain DSM 5456 / JCM 9403 / PLM1-5).